A 317-amino-acid chain; its full sequence is Melanocyte-stimulating hormone receptor (317 aa).

The Extracellular portion of the chain corresponds to Met1–Glu37. N-linked (GlcNAc...) asparagine glycosylation occurs at Asn29. A helical transmembrane segment spans residues Val38 to Ile63. Over Ala64 to Pro72 the chain is Cytoplasmic. Residues Met73–Leu93 form a helical membrane-spanning segment. Topologically, residues Glu94–Asn118 are extracellular. A helical transmembrane segment spans residues Val119–Val140. The Cytoplasmic portion of the chain corresponds to Asp141–Arg163. Residues Ala164–Tyr183 traverse the membrane as a helical segment. Topologically, residues Asp184–Cys191 are extracellular. Residues Leu192–Leu211 form a helical membrane-spanning segment. Residues Ala212 to Ala240 lie on the Cytoplasmic side of the membrane. A helical membrane pass occupies residues Ala241–Leu266. The Extracellular portion of the chain corresponds to Cys267 to Asn279. The helical transmembrane segment at Phe280–Phe300 threads the bilayer. Residues Arg301–Trp317 are Cytoplasmic-facing. The S-palmitoyl cysteine moiety is linked to residue Cys315.

The protein belongs to the G-protein coupled receptor 1 family. Interacts with MGRN1, but does not undergo MGRN1-mediated ubiquitination; this interaction competes with GNAS-binding and thus inhibits agonist-induced cAMP production. Interacts with OPN3; the interaction results in a decrease in MC1R-mediated cAMP signaling and ultimately a decrease in melanin production in melanocytes.

The protein resides in the cell membrane. Receptor for MSH (alpha, beta and gamma) and ACTH. The activity of this receptor is mediated by G proteins which activate adenylate cyclase. Mediates melanogenesis, the production of eumelanin (black/brown) and phaeomelanin (red/yellow), via regulation of cAMP signaling in melanocytes. This chain is Melanocyte-stimulating hormone receptor (MC1R), found in Papio hamadryas (Hamadryas baboon).